A 275-amino-acid polypeptide reads, in one-letter code: Small ribosomal subunit protein uS3 (275 aa).

Residues Ile38 to Lys106 form the KH type-2 domain. Residues Ala217–Ser275 are disordered. The span at Ser238–Ser275 shows a compositional bias: low complexity.

It belongs to the universal ribosomal protein uS3 family. In terms of assembly, part of the 30S ribosomal subunit. Forms a tight complex with proteins S10 and S14.

In terms of biological role, binds the lower part of the 30S subunit head. Binds mRNA in the 70S ribosome, positioning it for translation. The sequence is that of Small ribosomal subunit protein uS3 from Mycobacterium marinum (strain ATCC BAA-535 / M).